Consider the following 338-residue polypeptide: Protein REG2 (338 aa).

Residues 1 to 21 (MTLSNCDSLDNLFQDPPEEEE) are disordered.

In terms of biological role, regulatory subunit, binds to type-1 protein phosphatase. Functions with HEX2/REG1 and SNF1 protein kinase to regulate growth. Might regulate SNF1 directly or indirectly. This is Protein REG2 (REG2) from Saccharomyces cerevisiae (strain ATCC 204508 / S288c) (Baker's yeast).